A 300-amino-acid chain; its full sequence is Ribosomal RNA small subunit methyltransferase H (300 aa).

S-adenosyl-L-methionine-binding positions include 43 to 45 (AGH), D60, D105, and Q112.

It belongs to the methyltransferase superfamily. RsmH family.

It is found in the cytoplasm. It carries out the reaction cytidine(1402) in 16S rRNA + S-adenosyl-L-methionine = N(4)-methylcytidine(1402) in 16S rRNA + S-adenosyl-L-homocysteine + H(+). Its function is as follows. Specifically methylates the N4 position of cytidine in position 1402 (C1402) of 16S rRNA. The polypeptide is Ribosomal RNA small subunit methyltransferase H (Deinococcus deserti (strain DSM 17065 / CIP 109153 / LMG 22923 / VCD115)).